A 293-amino-acid chain; its full sequence is uncharacterized protein (293 aa).

It to M.jannaschii MJ1614 and MJ0008.

This is an uncharacterized protein from Methanocaldococcus jannaschii (strain ATCC 43067 / DSM 2661 / JAL-1 / JCM 10045 / NBRC 100440) (Methanococcus jannaschii).